The following is a 221-amino-acid chain: Kynurenine formamidase (221 aa).

Phenylalanine 30 is a binding site for substrate. Zn(2+) is bound by residues histidine 60, histidine 64, and aspartate 66. The Proton donor/acceptor role is filled by histidine 70. Residues histidine 172 and glutamate 184 each contribute to the Zn(2+) site.

It belongs to the Cyclase 1 superfamily. KynB family. In terms of assembly, homodimer. Requires Zn(2+) as cofactor.

The catalysed reaction is N-formyl-L-kynurenine + H2O = L-kynurenine + formate + H(+). Its pathway is amino-acid degradation; L-tryptophan degradation via kynurenine pathway; L-kynurenine from L-tryptophan: step 2/2. In terms of biological role, catalyzes the hydrolysis of N-formyl-L-kynurenine to L-kynurenine, the second step in the kynurenine pathway of tryptophan degradation. This is Kynurenine formamidase from Polaromonas sp. (strain JS666 / ATCC BAA-500).